Consider the following 156-residue polypeptide: Small ribosomal subunit protein uS7 (156 aa).

This sequence belongs to the universal ribosomal protein uS7 family. Part of the 30S ribosomal subunit. Contacts proteins S9 and S11.

Functionally, one of the primary rRNA binding proteins, it binds directly to 16S rRNA where it nucleates assembly of the head domain of the 30S subunit. Is located at the subunit interface close to the decoding center, probably blocks exit of the E-site tRNA. The chain is Small ribosomal subunit protein uS7 from Parafrankia sp. (strain EAN1pec).